The primary structure comprises 329 residues: AUGMIN subunit 7 (329 aa).

A coiled-coil region spans residues 169 to 197 (DVSELETKLSEQAKILSNLQQKVDDLAAK).

Part of the augmin complex composed of 8 subunits. The complex acts on microtubules and interacts with gamma-tubulin in spindles and the phragmoplast.

It is found in the cytoplasm. The protein resides in the cytoskeleton. Its subcellular location is the spindle. The protein localises to the phragmoplast. Functionally, contributes to the assembly of the acentrosomal spindle and phragmoplast microtubule arrays as part of the augmin complex. Regulates the association of gamma-tubulin with the spindle and phragmoplast microtubules. This chain is AUGMIN subunit 7, found in Arabidopsis thaliana (Mouse-ear cress).